Reading from the N-terminus, the 407-residue chain is Indoleamine 2,3-dioxygenase 1 (407 aa).

His-350 lines the heme b pocket. The segment at 362–407 (SKKKPTDGDKSEEPSNVESRGTGGTNPMTFLRSVKDTTEKALLSWP) is disordered. The span at 365–374 (KPTDGDKSEE) shows a compositional bias: basic and acidic residues.

Belongs to the indoleamine 2,3-dioxygenase family. Monomer. Heme b is required as a cofactor. In terms of tissue distribution, highly expressed in epididymis, duodemum, jejunum, ileum, colon and spleen. Highly expressed in epididymis, prostate, duodemum, jejunum, ileum, colon and spleen, not detected in the liver (at protein level). Expressed in tumors only upon exposure to IFN gamma. Constitutively expressed in placenta in trophoblast cells. Expression is restricted to perinuclear regions of primary trophoblast giant cells (TGCs) of fetal origin at mid-gestation (10.5 dpc). After placentation (14 dpc), no IDO expression was detected at the maternal-fetal interface.

The protein localises to the cytoplasm. The protein resides in the cytosol. The catalysed reaction is D-tryptophan + O2 = N-formyl-D-kynurenine. It catalyses the reaction L-tryptophan + O2 = N-formyl-L-kynurenine. Activity is inhibited by and MTH-trp (methylthiohydantoin-DL-tryptophan), modestly inhibited by L-1MT (1-methyl-L-tryptophan) but not D-1MT (1-methyl-D-tryptophan). Its function is as follows. Catalyzes the first and rate limiting step of the catabolism of the essential amino acid tryptophan along the kynurenine pathway. Involved in the peripheral immune tolerance, contributing to maintain homeostasis by preventing autoimmunity or immunopathology that would result from uncontrolled and overreacting immune responses. Tryptophan shortage inhibits T lymphocytes division and accumulation of tryptophan catabolites induces T-cell apoptosis and differentiation of regulatory T-cells. Acts as a suppressor of anti-tumor immunity. Limits the growth of intracellular pathogens by depriving tryptophan. Protects the fetus from maternal immune rejection. This chain is Indoleamine 2,3-dioxygenase 1, found in Mus musculus (Mouse).